A 251-amino-acid polypeptide reads, in one-letter code: Tungstate/molybdate/chromate-binding protein ModA (251 aa).

The signal sequence occupies residues Met-1–Ala-23. Positions 60 and 168 each coordinate molybdate.

This sequence belongs to the bacterial solute-binding protein ModA family. As to quaternary structure, the complex is composed of two ATP-binding proteins (ModC), two transmembrane proteins (ModB) and a solute-binding protein (ModA).

It localises to the periplasm. In terms of biological role, part of the ABC transporter complex ModABC involved in the transport of molybdenum into the cell. Binds tungstate and molybdate. Can also bind chromate, with lower affinity. Plays an essential role in recruitment of molybdate for nitrate reduction. This Pseudomonas aeruginosa (strain ATCC 15692 / DSM 22644 / CIP 104116 / JCM 14847 / LMG 12228 / 1C / PRS 101 / PAO1) protein is Tungstate/molybdate/chromate-binding protein ModA.